Consider the following 401-residue polypeptide: Ninja-family protein MODD (401 aa).

Disordered stretches follow at residues 95–135 and 215–238; these read KQGV…GEGR and TGNK…GLPP. Positions 105–130 are enriched in low complexity; it reads RPSGGAEAEPAAARLPASGSPSSGSS. Polar residues predominate over residues 217–226; it reads NKKTGGNVNH.

The protein belongs to the Ninja family. As to quaternary structure, interacts with BZIP46, TPR3 and PUB70.

Its subcellular location is the nucleus. Acts as a negative regulator of abscisic acid (ABA) signaling and drought tolerance. Mediates deactivation and degradation of BZIP46, a positive regulator of ABA signaling and drought stress tolerance. Represses BZIP46 activity via interaction with the TPR3-HDAC1 corepressor complex and down-regulation of the histone acetylation level at BZIP46 target genes. Promotes BZIP46 degradation via interaction with the U-box type ubiquitin E3 ligase PUB70. The polypeptide is Ninja-family protein MODD (Oryza sativa subsp. japonica (Rice)).